The following is a 404-amino-acid chain: Cysteine desulfurase IscS (404 aa).

Pyridoxal 5'-phosphate contacts are provided by residues 75-76 (AT), asparagine 155, glutamine 183, and 203-205 (SGH). Lysine 206 carries the post-translational modification N6-(pyridoxal phosphate)lysine. Threonine 243 provides a ligand contact to pyridoxal 5'-phosphate. The active-site Cysteine persulfide intermediate is the cysteine 328. Position 328 (cysteine 328) interacts with [2Fe-2S] cluster.

Belongs to the class-V pyridoxal-phosphate-dependent aminotransferase family. NifS/IscS subfamily. In terms of assembly, homodimer. Forms a heterotetramer with IscU, interacts with other sulfur acceptors. Requires pyridoxal 5'-phosphate as cofactor.

The protein localises to the cytoplasm. The enzyme catalyses (sulfur carrier)-H + L-cysteine = (sulfur carrier)-SH + L-alanine. The protein operates within cofactor biosynthesis; iron-sulfur cluster biosynthesis. Its function is as follows. Master enzyme that delivers sulfur to a number of partners involved in Fe-S cluster assembly, tRNA modification or cofactor biosynthesis. Catalyzes the removal of elemental sulfur atoms from cysteine to produce alanine. Functions as a sulfur delivery protein for Fe-S cluster synthesis onto IscU, an Fe-S scaffold assembly protein, as well as other S acceptor proteins. In Shewanella halifaxensis (strain HAW-EB4), this protein is Cysteine desulfurase IscS.